The primary structure comprises 123 residues: Intracellular iron chaperone frataxin (123 aa).

In terms of assembly, homodimer, upon Fe(2+) binding. Interacts with the SufS/SufU complex. Interacts with CpfC. Fe(2+) is required as a cofactor.

It is found in the cytoplasm. Functionally, plays an essential role in iron intracellular trafficking to iron cofactor biogenesis systems including iron-sulfur cluster (Fe-S) or heme assembly. Promotes the biosynthesis of iron-sulfur clusters by delivering Fe to the complex composed of the cysteine desulfurase SufS and the zinc-dependent sulfurtransferase SufU. Also plays a critical role in coproporphyrin-dependent heme b biogenesis and thus provides an essential function for the bacterial global metabolism. In Bacillus subtilis (strain 168), this protein is Intracellular iron chaperone frataxin (fra).